The following is a 313-amino-acid chain: Sorting nexin-20 (313 aa).

Residues 1 to 61 are disordered; that stretch reads MASPQHPGGP…MTTRELQEHW (61 aa). At Ser3 the chain carries Phosphoserine. Residues 29 to 38 show a composition bias toward pro residues; that stretch reads PPGPDLPCPG. Residues 45–55 show a composition bias toward polar residues; sequence GPTSNSNMTTR. One can recognise a PX domain in the interval 71–188; the sequence is VRLLFEIASA…DFLTRPELCE (118 aa). 4 residues coordinate a 1,2-diacyl-sn-glycero-3-phospho-(1D-myo-inositol-3-phosphate): Arg113, Ser115, Lys140, and Arg154.

This sequence belongs to the sorting nexin family. In terms of assembly, interacts with SELPLG. Interaction with SELPLG is controversial.

It localises to the early endosome membrane. It is found in the cell membrane. The protein resides in the cytoplasm. The protein localises to the nucleus. May play a role in cellular vesicle trafficking. Has been proposed to function as a sorting protein that targets SELPLG into endosomes, but has no effect on SELPLG internalization from the cell surface, or on SELPLG-mediated cell-cell adhesion. This chain is Sorting nexin-20 (Snx20), found in Rattus norvegicus (Rat).